The primary structure comprises 72 residues: Protein CYSTEINE-RICH TRANSMEMBRANE MODULE 9 (72 aa).

Residues 1–22 (MNPSEQNHLSVEKPSQTSSGPY) show a composition bias toward polar residues. The tract at residues 1-46 (MNPSEQNHLSVEKPSQTSSGPYTSPPPIGYPTRDAMVGDPPAAAVE) is disordered. Residues 49–65 (SKGDGFWKGCCAAICCC) form a helical membrane-spanning segment.

Belongs to the CYSTM1 family. Heterodimers. Interacts with WIH1/CYSTM13. As to expression, mostly expressed in roots and flowers and, to a lower extent, in stems, siliques and leaves.

It localises to the cell membrane. It is found in the nucleus. Its function is as follows. Involved in resistance to abiotic stress. The chain is Protein CYSTEINE-RICH TRANSMEMBRANE MODULE 9 from Arabidopsis thaliana (Mouse-ear cress).